The sequence spans 556 residues: Zinc finger protein 18 (556 aa).

The SCAN box domain occupies 41 to 123; it reads RQLFRQFRYQ…TLVESLKGDP (83 aa). The interval 169-195 is disordered; sequence QDLPLQNTSSAPGELLSHGVKEESDLE. The KRAB domain maps to 218–291; that stretch reads EVGTALLPSL…HLHSAEKMAR (74 aa). C2H2-type zinc fingers lie at residues 415–437, 443–465, 471–493, 499–521, and 527–549; these read PTCRECGKTFYRNSQLVFHQRTH, FHCRICKKAFLRSSDFVKHQRTH, CKCDYCGKGFSDFSGLRHHEKIH, YKCPICEKSFIQRSNFNRHQRVH, and YKCTHCGKRFSWSSSLDKHQRSH.

This sequence belongs to the krueppel C2H2-type zinc-finger protein family.

The protein resides in the nucleus. In terms of biological role, may be involved in transcriptional regulation. The chain is Zinc finger protein 18 (Znf18) from Rattus norvegicus (Rat).